The sequence spans 311 residues: Ribonuclease HIII (311 aa).

An RNase H type-2 domain is found at 95 to 311 (MSIVGSDEVG…NTEKAFRLLK (217 aa)). A divalent metal cation contacts are provided by Asp101, Glu102, and Asp206.

Belongs to the RNase HII family. RnhC subfamily. Requires Mn(2+) as cofactor. The cofactor is Mg(2+).

The protein resides in the cytoplasm. It carries out the reaction Endonucleolytic cleavage to 5'-phosphomonoester.. Endonuclease that specifically degrades the RNA of RNA-DNA hybrids. The sequence is that of Ribonuclease HIII from Bacillus cereus (strain ATCC 10987 / NRS 248).